We begin with the raw amino-acid sequence, 66 residues long: Regulator of G-protein signaling 6 (66 aa).

Residues Leu1 to Leu66 form the RGS domain.

In terms of assembly, interacts with GNB5. Interacts with RGS7BP, leading to regulate the subcellular location of the heterodimer formed with GNB5. Interacts with GNAI1.

It localises to the cytoplasm. It is found in the cytosol. The protein resides in the membrane. The protein localises to the nucleus. Its subcellular location is the cell membrane. Its function is as follows. Regulates G protein-coupled receptor signaling cascades. Inhibits signal transduction by increasing the GTPase activity of G protein alpha subunits, thereby driving them into their inactive GDP-bound form. The RGS6/GNB5 dimer enhances GNAO1 GTPase activity. In Rattus norvegicus (Rat), this protein is Regulator of G-protein signaling 6 (Rgs6).